The primary structure comprises 147 residues: D-aminoacyl-tRNA deacylase (147 aa).

The Gly-cisPro motif, important for rejection of L-amino acids signature appears at 137-138; the sequence is GP.

The protein belongs to the DTD family. Homodimer.

It localises to the cytoplasm. The enzyme catalyses glycyl-tRNA(Ala) + H2O = tRNA(Ala) + glycine + H(+). The catalysed reaction is a D-aminoacyl-tRNA + H2O = a tRNA + a D-alpha-amino acid + H(+). An aminoacyl-tRNA editing enzyme that deacylates mischarged D-aminoacyl-tRNAs. Also deacylates mischarged glycyl-tRNA(Ala), protecting cells against glycine mischarging by AlaRS. Acts via tRNA-based rather than protein-based catalysis; rejects L-amino acids rather than detecting D-amino acids in the active site. By recycling D-aminoacyl-tRNA to D-amino acids and free tRNA molecules, this enzyme counteracts the toxicity associated with the formation of D-aminoacyl-tRNA entities in vivo and helps enforce protein L-homochirality. The sequence is that of D-aminoacyl-tRNA deacylase from Jannaschia sp. (strain CCS1).